Consider the following 129-residue polypeptide: MAGRKTTRKRRVRKNVESGVAHIHSTFNNTLVMITDPRGNAIAWSSAGALGFKGSRKSTPFAAQMAAEAAAKESMEHGMKSVEVAVKGPGSGREAAIRSLQATGLEVTAIRDVTPVPHNGSRPPKRRRV.

This sequence belongs to the universal ribosomal protein uS11 family. In terms of assembly, part of the 30S ribosomal subunit. Interacts with proteins S7 and S18. Binds to IF-3.

Functionally, located on the platform of the 30S subunit, it bridges several disparate RNA helices of the 16S rRNA. Forms part of the Shine-Dalgarno cleft in the 70S ribosome. This chain is Small ribosomal subunit protein uS11, found in Lacticaseibacillus casei (strain BL23) (Lactobacillus casei).